Here is an 86-residue protein sequence, read N- to C-terminus: Small ribosomal subunit protein bS20 (86 aa).

The interval 1–27 (MANSKSAKKRAIQAEKRRQHNASRRSM) is disordered.

This sequence belongs to the bacterial ribosomal protein bS20 family.

In terms of biological role, binds directly to 16S ribosomal RNA. This chain is Small ribosomal subunit protein bS20, found in Vibrio atlanticus (strain LGP32) (Vibrio splendidus (strain Mel32)).